Here is a 100-residue protein sequence, read N- to C-terminus: Small ribosomal subunit protein uS14 (100 aa).

The protein belongs to the universal ribosomal protein uS14 family. In terms of assembly, part of the 30S ribosomal subunit. Contacts proteins S3 and S10.

Binds 16S rRNA, required for the assembly of 30S particles and may also be responsible for determining the conformation of the 16S rRNA at the A site. The sequence is that of Small ribosomal subunit protein uS14 from Prochlorococcus marinus (strain NATL2A).